The following is a 471-amino-acid chain: MTVVTTMPRDAAGTALLPERPRGPIMTDLIELLRLAGPVVLSRLGIMVMGLTDAIVVGHFSAQQLGYHAMAWAPSSVFVTATVGLLVGVQVMTARAMGAGNPHETGAVLRRGLVYAGWLGFGSMALLALFGPMFLQAMGLKDGLAEGATLPLIVFSLSLPVYAISVVLTFWLEGLSRPGPGAAMMWLANVVNLGANLLLVPGVLGPPALGAVGGAWATFIARTALALALAIFVIRMKEARELGVFDKPARDRPAEIEQRRIGYGAGASNFFEVSAFAGMNLICGWISAVAVAAYTVVLNVSAIIFMVPLGVASATAVMVGRAYGARDPAGMTRAGWIAFAVIGVIGVLFGLLLYPTKHWVALAYTTDPAALALILPALVLACLFFAPDAVQVVAAQALRARGEVWVPTITHLISYALVMGPLAWWLAIPKGMGLNGVLVSIIVTSFLAAGFLLMRFRMLDWRDRKAAQEAA.

The next 11 helical transmembrane spans lie at 38–58 (PVVL…IVVG), 69–89 (AMAW…LVGV), 114–134 (VYAG…GPMF), 152–172 (LIVF…TFWL), 197–217 (LLLV…GAWA), 266–286 (GASN…CGWI), 289–309 (VAVA…MVPL), 334–354 (AGWI…LLLY), 370–390 (ALAL…PDAV), 409–429 (ITHL…LAIP), and 434–454 (LNGV…FLLM).

It belongs to the multi antimicrobial extrusion (MATE) (TC 2.A.66.1) family.

The protein resides in the cell inner membrane. Its function is as follows. Multidrug efflux pump. This Caulobacter vibrioides (strain ATCC 19089 / CIP 103742 / CB 15) (Caulobacter crescentus) protein is Probable multidrug resistance protein NorM (norM).